The following is a 346-amino-acid chain: Partitioning defective 6 homolog alpha (346 aa).

Residues 1-116 (MARPQRTPAR…SNSLQRRKKG (116 aa)) form an interaction with PRKCI and PRKCZ region. One can recognise a PB1 domain in the interval 15–95 (IVEVKSKFDA…PPLRLLVQKR (81 aa)). The tract at residues 126–253 (RTRPPLLISL…VTVKPANQRN (128 aa)) is interaction with PARD3 and CDC42. In terms of domain architecture, Pseudo-CRIB spans 133-150 (ISLPQDFRQVSSVIDVDL). Residues 157-250 (RVRLHKHGSD…NLIVTVKPAN (94 aa)) form the PDZ domain. Disordered stretches follow at residues 257–294 (RGAS…HPPC) and 317–346 (GSSL…GFSL). At Ser-278 the chain carries Phosphoserine. The segment covering 317 to 332 (GSSLPSLDSREQANSG) has biased composition (polar residues). A Phosphoserine modification is found at Ser-345.

It belongs to the PAR6 family. In terms of assembly, interacts with PALS1 and CRB3. Interacts with PARD3. Interacts with GTP-bound forms of CDC42, RHOQ/TC10 and RAC1. Interacts with the N-terminal part of PRKCI and PRKCZ. Part of a complex with PARD3, CDC42 or RAC1 and PRKCI or PRKCZ. Part of a complex with LLGL1 and PRKCI. Interacts with MAP2K5. Interacts with TGFBR1; involved in TGF-beta induced epithelial to mesenchymal transition. Interacts with ECT2 ('Thr-359' phosphorylated form) and PRKCI. Interacts with DCTN1 and PCM1. In terms of processing, phosphorylated by the TGF-beta receptor. Ubiquitinated by the SCF(FBXO31) complex, leading to its proteasomal degradation.

It localises to the cytoplasm. It is found in the cell membrane. The protein localises to the cell junction. The protein resides in the tight junction. Its subcellular location is the cytoskeleton. It localises to the microtubule organizing center. It is found in the centrosome. The protein localises to the centriolar satellite. In terms of biological role, adapter protein involved in asymmetrical cell division and cell polarization processes. Probably involved in the formation of epithelial tight junctions. Association with PARD3 may prevent the interaction of PARD3 with F11R/JAM1, thereby preventing tight junction assembly. The PARD6-PARD3 complex links GTP-bound Rho small GTPases to atypical protein kinase C proteins. Regulates centrosome organization and function. Essential for the centrosomal recruitment of key proteins that control centrosomal microtubule organization. In Rattus norvegicus (Rat), this protein is Partitioning defective 6 homolog alpha (Pard6a).